We begin with the raw amino-acid sequence, 368 residues long: 3-dehydroquinate synthase (368 aa).

NAD(+) is bound by residues 69–74 (DGEAYK), 103–107 (GVIGD), 127–128 (TT), K140, and K149. Positions 182, 245, and 262 each coordinate Zn(2+).

The protein belongs to the sugar phosphate cyclases superfamily. Dehydroquinate synthase family. Co(2+) serves as cofactor. Requires Zn(2+) as cofactor. The cofactor is NAD(+).

The protein localises to the cytoplasm. It catalyses the reaction 7-phospho-2-dehydro-3-deoxy-D-arabino-heptonate = 3-dehydroquinate + phosphate. It participates in metabolic intermediate biosynthesis; chorismate biosynthesis; chorismate from D-erythrose 4-phosphate and phosphoenolpyruvate: step 2/7. Catalyzes the conversion of 3-deoxy-D-arabino-heptulosonate 7-phosphate (DAHP) to dehydroquinate (DHQ). The chain is 3-dehydroquinate synthase from Pseudomonas aeruginosa (strain LESB58).